Reading from the N-terminus, the 158-residue chain is Transcription elongation factor GreA (158 aa).

The stretch at 47–74 forms a coiled coil; sequence AEYHAAKEEQSHNEGRIAELEDKLARAD.

The protein belongs to the GreA/GreB family.

Its function is as follows. Necessary for efficient RNA polymerase transcription elongation past template-encoded arresting sites. The arresting sites in DNA have the property of trapping a certain fraction of elongating RNA polymerases that pass through, resulting in locked ternary complexes. Cleavage of the nascent transcript by cleavage factors such as GreA or GreB allows the resumption of elongation from the new 3'terminus. GreA releases sequences of 2 to 3 nucleotides. The polypeptide is Transcription elongation factor GreA (Nitrobacter winogradskyi (strain ATCC 25391 / DSM 10237 / CIP 104748 / NCIMB 11846 / Nb-255)).